The chain runs to 100 residues: Large ribosomal subunit protein bL21 (100 aa).

This sequence belongs to the bacterial ribosomal protein bL21 family. As to quaternary structure, part of the 50S ribosomal subunit. Contacts proteins L15 and L20.

In terms of biological role, binds directly to 23S rRNA, probably serving to organize its structure. This is Large ribosomal subunit protein bL21 from Deinococcus radiodurans (strain ATCC 13939 / DSM 20539 / JCM 16871 / CCUG 27074 / LMG 4051 / NBRC 15346 / NCIMB 9279 / VKM B-1422 / R1).